Reading from the N-terminus, the 187-residue chain is Avirulence protein ATR39-2 (187 aa).

Residues 1 to 20 (MVKCTPLLALTVIVSAGSDA) form the signal peptide. The RxLR-dEER motif lies at 49 to 66 (RVLRASDVPNEVAAGESR).

It belongs to the RxLR effector family.

Its subcellular location is the secreted. The protein resides in the host cell. Functionally, secreted effector that acts as an elicitor of hypersensitive response (HR) specifically on plants carrying defense protein RPP39. The allele ATR39-1 is recognized by RPP39, whereas the ATR39-2 allele is nor recognized. This is Avirulence protein ATR39-2 from Hyaloperonospora arabidopsidis (strain Emoy2) (Downy mildew agent).